A 311-amino-acid chain; its full sequence is MTEKSNGMSWLSKITPPGMSKIFSKRDTPDNLWVKCPVSEEMVFHKDLEAGLFVTPAGHHMRIAPAYRFQFTFDGDYTEIETPEVVKDPLKFRDDKPYTAKLAAARKKTGRDDSMAIATGTIGGLDAVVLVQNFAFMGGSLGMAAGESFIKAAETALARKAPMIVFTAAGGARMQEGALSLMQMPRTTLAVEMLREAGLPYIVVLTDPTTGGVTASYAMLGDVHIAEPGALIGFAGPRVIEQTIREKLPEGFQRAEYLLEKGMVDKVVHRADIPATLARMLRVLMKKPGTSMPAALTPPAPDHVVADGGSH.

The region spanning 32-299 (LWVKCPVSEE…TSMPAALTPP (268 aa)) is the CoA carboxyltransferase N-terminal domain. Residues 291–311 (SMPAALTPPAPDHVVADGGSH) are disordered.

Belongs to the AccD/PCCB family. In terms of assembly, acetyl-CoA carboxylase is a heterohexamer composed of biotin carboxyl carrier protein (AccB), biotin carboxylase (AccC) and two subunits each of ACCase subunit alpha (AccA) and ACCase subunit beta (AccD).

It localises to the cytoplasm. It catalyses the reaction N(6)-carboxybiotinyl-L-lysyl-[protein] + acetyl-CoA = N(6)-biotinyl-L-lysyl-[protein] + malonyl-CoA. It functions in the pathway lipid metabolism; malonyl-CoA biosynthesis; malonyl-CoA from acetyl-CoA: step 1/1. Functionally, component of the acetyl coenzyme A carboxylase (ACC) complex. Biotin carboxylase (BC) catalyzes the carboxylation of biotin on its carrier protein (BCCP) and then the CO(2) group is transferred by the transcarboxylase to acetyl-CoA to form malonyl-CoA. In Maricaulis maris (strain MCS10) (Caulobacter maris), this protein is Acetyl-coenzyme A carboxylase carboxyl transferase subunit beta.